We begin with the raw amino-acid sequence, 182 residues long: Peptidoglycan L,D-endopeptidase MepK (182 aa).

The segment at residues 1–30 (MDKFDANRRKLLALGGVALGAAILPTPAFA) is a signal peptide (tat-type signal). 3 residues coordinate Zn(2+): H133, D140, and H173.

The protein belongs to the peptidase M15 family. It depends on Zn(2+) as a cofactor. Predicted to be exported by the Tat system. The position of the signal peptide cleavage has not been experimentally proven.

It functions in the pathway cell wall biogenesis; cell wall polysaccharide biosynthesis. Its function is as follows. L,D-endopeptidase that cleaves meso-diaminopimelic acid (mDAP)-mDAP cross-links in peptidoglycan. It works in conjunction with other elongation-specific D,D-endopeptidases to make space for efficient incorporation of nascent peptidoglycan strands into the sacculus and thus enable cell wall expansion. The sequence is that of Peptidoglycan L,D-endopeptidase MepK from Escherichia coli O157:H7.